We begin with the raw amino-acid sequence, 147 residues long: Transcriptional repressor NrdR (147 aa).

A zinc finger spans residues 3–34 (CPYCGNVETTVVETRESDEGDAVRRRRRCSAC). Residues 49-139 (PAVVKKNGDR…VYREFEDIDA (91 aa)) enclose the ATP-cone domain.

This sequence belongs to the NrdR family. Zn(2+) is required as a cofactor.

Its function is as follows. Negatively regulates transcription of bacterial ribonucleotide reductase nrd genes and operons by binding to NrdR-boxes. This is Transcriptional repressor NrdR from Leptothrix cholodnii (strain ATCC 51168 / LMG 8142 / SP-6) (Leptothrix discophora (strain SP-6)).